A 451-amino-acid chain; its full sequence is tRNA-2-methylthio-N(6)-dimethylallyladenosine synthase (451 aa).

The region spanning L3–I120 is the MTTase N-terminal domain. Residues C12, C49, C83, C157, C161, and C164 each contribute to the [4Fe-4S] cluster site. Residues Q143–K375 enclose the Radical SAM core domain. The 64-residue stretch at Q378–S441 folds into the TRAM domain.

This sequence belongs to the methylthiotransferase family. MiaB subfamily. In terms of assembly, monomer. Requires [4Fe-4S] cluster as cofactor.

Its subcellular location is the cytoplasm. It carries out the reaction N(6)-dimethylallyladenosine(37) in tRNA + (sulfur carrier)-SH + AH2 + 2 S-adenosyl-L-methionine = 2-methylsulfanyl-N(6)-dimethylallyladenosine(37) in tRNA + (sulfur carrier)-H + 5'-deoxyadenosine + L-methionine + A + S-adenosyl-L-homocysteine + 2 H(+). Functionally, catalyzes the methylthiolation of N6-(dimethylallyl)adenosine (i(6)A), leading to the formation of 2-methylthio-N6-(dimethylallyl)adenosine (ms(2)i(6)A) at position 37 in tRNAs that read codons beginning with uridine. The polypeptide is tRNA-2-methylthio-N(6)-dimethylallyladenosine synthase (Baumannia cicadellinicola subsp. Homalodisca coagulata).